We begin with the raw amino-acid sequence, 128 residues long: Sulfurtransferase TusD (128 aa).

Catalysis depends on C78, which acts as the Cysteine persulfide intermediate.

It belongs to the DsrE/TusD family. As to quaternary structure, heterohexamer, formed by a dimer of trimers. The hexameric TusBCD complex contains 2 copies each of TusB, TusC and TusD. The TusBCD complex interacts with TusE.

It localises to the cytoplasm. Its function is as follows. Part of a sulfur-relay system required for 2-thiolation of 5-methylaminomethyl-2-thiouridine (mnm(5)s(2)U) at tRNA wobble positions. Accepts sulfur from TusA and transfers it in turn to TusE. The polypeptide is Sulfurtransferase TusD (Escherichia coli (strain K12 / MC4100 / BW2952)).